Reading from the N-terminus, the 425-residue chain is COBRA-like protein 4 (425 aa).

An N-terminal signal peptide occupies residues 1–27 (MAIGVGGCCAVLLAAALLFSSPATTYA). 5 N-linked (GlcNAc...) asparagine glycosylation sites follow: Asn36, Asn163, Asn171, Asn319, and Asn352.

The protein belongs to the COBRA family.

The polypeptide is COBRA-like protein 4 (BC1L9) (Oryza sativa subsp. japonica (Rice)).